The primary structure comprises 630 residues: Plastin-1 (630 aa).

The fimbrin headpiece stretch occupies residues 1–114; sequence MENNVTTISR…LGGTSSISTE (114 aa). EF-hand domains lie at 11 to 46 and 51 to 86; these read EELE…ASLP and KVRE…LKSK. Ca(2+) is bound by residues Asp24, Asp26, Ser28, Tyr30, Glu35, Asp64, Asn66, Asp68, Lys70, and Glu75. Actin-binding stretches follow at residues 108 to 375 and 376 to 624; these read TSSI…LFNT and YPAL…LMGR. The interval 115–630 is fimbrin core; the sequence is GTQHSYSEEE…LMGRGLNKIK (516 aa). 4 consecutive Calponin-homology (CH) domains span residues 122 to 238, 266 to 377, 396 to 505, and 517 to 626; these read EEEK…KVGL, LSPE…NTYP, SNEE…RRYT, and KVND…GRGL.

As to quaternary structure, monomer. The N-terminus is blocked.

It is found in the cytoplasm. The protein resides in the cell projection. The protein localises to the stereocilium. Actin-bundling protein. In the inner ear, it is required for stereocilia formation. Mediates liquid packing of actin filaments that is necessary for stereocilia to grow to their proper dimensions. This Gallus gallus (Chicken) protein is Plastin-1 (PLS1).